Reading from the N-terminus, the 288-residue chain is 4-hydroxybenzoate octaprenyltransferase (288 aa).

6 consecutive transmembrane segments (helical) span residues 33-53 (LWAL…AVFV), 99-119 (LFIV…TMTI), 163-183 (ESLP…AVAY), 213-233 (LIIG…GWLN), 234-254 (GLGW…GWQQ), and 268-288 (AFMN…MSYL).

The protein belongs to the UbiA prenyltransferase family. Mg(2+) is required as a cofactor.

It localises to the cell inner membrane. It catalyses the reaction all-trans-octaprenyl diphosphate + 4-hydroxybenzoate = 4-hydroxy-3-(all-trans-octaprenyl)benzoate + diphosphate. Its pathway is cofactor biosynthesis; ubiquinone biosynthesis. Functionally, catalyzes the prenylation of para-hydroxybenzoate (PHB) with an all-trans polyprenyl group. Mediates the second step in the final reaction sequence of ubiquinone-8 (UQ-8) biosynthesis, which is the condensation of the polyisoprenoid side chain with PHB, generating the first membrane-bound Q intermediate 3-octaprenyl-4-hydroxybenzoate. The chain is 4-hydroxybenzoate octaprenyltransferase from Klebsiella pneumoniae subsp. pneumoniae (strain ATCC 700721 / MGH 78578).